Reading from the N-terminus, the 504-residue chain is Transcriptional coactivator YAP1 (504 aa).

Composition is skewed to pro residues over residues 1–12 (MDPGQQPPPQPA) and 20–36 (PSQP…PGQP). A disordered region spans residues 1-59 (MDPGQQPPPQPAPQGQGQPPSQPPQGQGPPSGPGQPAPAATQAAPQAPPAGHQIVHVRG). Low complexity predominate over residues 37–51 (APAATQAAPQAPPAG). Ser61 is modified (phosphoserine; by LATS1 and LATS2). Phosphothreonine is present on Thr63. The stretch at 86 to 100 (MRLRKLPDSFFKPPE) forms a coiled coil. An N6-lactoyllysine modification is found at Lys90. The segment at 91 to 114 (LPDSFFKPPEPKSHSRQASTDAGT) is disordered. Position 105 is a phosphoserine (Ser105). Ser109 bears the Phosphoserine; by LATS1 and LATS2 mark. Thr110 carries the post-translational modification Phosphothreonine. Phosphothreonine; by MAPK8 and MAPK9 is present on Thr119. The residue at position 127 (Ser127) is a Phosphoserine; by LATS1 and LATS2. Phosphoserine occurs at positions 128 and 131. A disordered region spans residues 133-158 (QLGAVSPGTLTPTGVVSGPAATPTAQ). The residue at position 138 (Ser138) is a Phosphoserine; by MAPK8 and MAPK9. Thr154 is subject to Phosphothreonine; by MAPK8 and MAPK9. Position 164 is a phosphoserine; by LATS1 and LATS2 (Ser164). WW domains are found at residues 171–204 (VPLP…DPRK) and 230–263 (GPLP…DPRL). Ser274 and Ser289 each carry phosphoserine. Disordered regions lie at residues 275-309 (QSAP…MRLQ) and 355-407 (LEQD…MSSY). Positions 291 to 504 (QGGVMGGSNS…LDKESFLTWL (214 aa)) are transactivation domain. The stretch at 298 to 359 (SNSNQQQQMR…SQLPTLEQDG (62 aa)) forms a coiled coil. The segment covering 355–391 (LEQDGGTQNPVSSPGMSQELRTMTTNSSDPFLNSGTY) has biased composition (polar residues). Ser367 bears the Phosphoserine; by MAPK8 and MAPK9 mark. Phosphoserine occurs at positions 371, 381, 382, and 388. A Phosphoserine; by LATS1 and LATS2 modification is found at Ser397. Ser400 and Ser403 each carry phosphoserine; by CK1. Tyr407 carries the post-translational modification Phosphotyrosine; by ABL1. Thr412 is subject to Phosphothreonine; by MAPK8 and MAPK9.

The protein belongs to the YAP1 family. As to quaternary structure, part of a complex when phosphorylated that contains DSG3, PKP1, YAP1 and YWHAG; the complex is required for localization of DSG3 and YAP1 to the cell membrane in keratinocytes. Binds to the SH3 domain of the YES kinase. Binds to WBP1 and WBP2. Binds, in vitro, through the WW1 domain, to neural isoforms of ENAH that contain the PPSY motif. The phosphorylated form interacts with YWHAB. Interacts (via WW domains) with LATS1 (via PPxY motif 2). Interacts with LATS2. Interacts with TEAD1, TEAD2, TEAD3 and TEAD4. Interacts with TP73. Interacts with RUNX1. Interacts with HCK. Interacts (via WW domains) with PTPN14 (via PPxY motif 2); this interaction leads to the cytoplasmic sequestration of YAP1 and inhibits its transcriptional coactivator activity. Interacts (when phosphorylated at Ser-127) with SMAD2, SMAD3 and WWTR1. Interacts with PRRG2 (via cytoplasmic domain). Interacts (via WW domains) with PRRG4 (via cytoplasmic domain). Interacts (phosphorylated) with CLDN18; the interaction sequesters YAP1 away from the nucleus and thereby restricts transcription of YAP1 target genes. Interacts with SMAD1. Interacts with AMOTL2, the interaction is required for ubiquitination of AMOTL2 and localization of YAP1 to tight junctions. Interacts with AMOT isoform 1; the interaction facilitates translocation of YAP1 to the cytoplasm and tight junctions. In terms of assembly, interacts (via WW domain 1) with isoform 3 of ERBB4 (via PPxY motif 2). Post-translationally, phosphorylated by LATS1 and LATS2; leading to cytoplasmic translocation and inactivation. Phosphorylated by ABL1; leading to YAP1 stabilization, enhanced interaction with TP73 and recruitment onto proapoptotic genes; in response to DNA damage. Phosphorylation at Ser-400 and Ser-403 by CK1 is triggered by previous phosphorylation at Ser-397 by LATS proteins and leads to YAP1 ubiquitination by SCF(beta-TRCP) E3 ubiquitin ligase and subsequent degradation. Phosphorylated at Thr-119, Ser-138, Thr-154, Ser-367 and Thr-412 by MAPK8/JNK1 and MAPK9/JNK2, which is required for the regulation of apoptosis by YAP1. Phosphorylated in the nucleus by PRP4K; phosphorylation leads to nuclear exclusion. Lactylation by AARS1 promotes nuclear localization and stabilization of YAP1, leading to increased Hippo signaling pathway. Delactylated by SIRT1. In terms of processing, ubiquitinated by SCF(beta-TRCP) E3 ubiquitin ligase. As to expression, increased expression seen in some liver and prostate cancers. Isoforms lacking the transactivation domain found in striatal neurons of patients with Huntington disease (at protein level).

It localises to the cytoplasm. It is found in the nucleus. The protein resides in the cell junction. The protein localises to the tight junction. Its subcellular location is the cell membrane. In terms of biological role, transcriptional regulator with dual roles as a coactivator and corepressor. Critical downstream regulatory target in the Hippo signaling pathway, crucial for organ size control and tumor suppression by restricting proliferation and promoting apoptosis. The Hippo signaling pathway core involves a kinase cascade featuring STK3/MST2 and STK4/MST1, along with its regulatory partner SAV1, which phosphorylates and activates LATS1/2 in complex with their regulatory protein, MOB1. This activation leads to the phosphorylation and inactivation of the YAP1 oncoprotein and WWTR1/TAZ. Phosphorylation of YAP1 by LATS1/2 prevents its nuclear translocation, thereby regulating the expression of its target genes. The transcriptional regulation of gene expression requires TEAD transcription factors and modulates cell growth, anchorage-independent growth, and induction of epithelial-mesenchymal transition (EMT). Plays a key role in tissue tension and 3D tissue shape by regulating the cortical actomyosin network, acting via ARHGAP18, a Rho GTPase activating protein that suppresses F-actin polymerization. It also suppresses ciliogenesis by acting as a transcriptional corepressor of TEAD4 target genes AURKA and PLK1. In conjunction with WWTR1, regulates TGFB1-dependent SMAD2 and SMAD3 nuclear accumulation. Synergizes with WBP2 to enhance PGR activity. Activates the C-terminal fragment (CTF) of ERBB4 (isoform 3). In Homo sapiens (Human), this protein is Transcriptional coactivator YAP1.